We begin with the raw amino-acid sequence, 1823 residues long: THO complex subunit 2 (1823 aa).

Residues 935-1003 (NRYESEISKQ…RRRLSREKDT (69 aa)) are a coiled coil. Positions 964-969 (KRKKEK) match the Nuclear localization signal motif. 2 disordered regions span residues 1244 to 1382 (LVGV…KDLN) and 1394 to 1823 (ALSS…GSRE). Basic and acidic residues-rich tracts occupy residues 1272 to 1283 (QMLKTKPLDGRT), 1312 to 1330 (KSME…DENP), and 1356 to 1367 (AKQDFGKDDGKS). A compositionally biased stretch (polar residues) spans 1394–1409 (ALSSTAANGSIATGSS). Residues 1432-1596 (PRHEIVTSVR…EKSHPDDHFH (165 aa)) show a composition bias toward basic and acidic residues. A compositionally biased stretch (pro residues) spans 1600–1610 (LPPPPPLPPNI). Composition is skewed to basic and acidic residues over residues 1616 to 1625 (AAKEDLERRA), 1636 to 1648 (PRHE…RSEE), 1655 to 1706 (DDAK…FEAS), and 1768 to 1785 (LGKE…DPIA). 2 positions are modified to phosphoserine: serine 1646 and serine 1696. Residues 1802 to 1816 (MTVNGKTTRGEQSGS) show a composition bias toward polar residues.

It belongs to the THOC2 family. In terms of assembly, component of the THO complex, which is composed of THO1, THO2, THO3, THO5, THO6 and THO7.

It localises to the nucleus. Functionally, acts as a component of the THO subcomplex of the TREX complex which is thought to couple mRNA transcription, processing and nuclear export. This is THO complex subunit 2 (THO2) from Arabidopsis thaliana (Mouse-ear cress).